The chain runs to 358 residues: L-tryptophan methyltransferase trpM (358 aa).

Belongs to the methyltransferase superfamily.

It carries out the reaction L-tryptophan + S-adenosyl-L-methionine = N(alpha)-methyl-L-tryptophan + S-adenosyl-L-homocysteine + H(+). The catalysed reaction is N(alpha)-methyl-L-tryptophan + S-adenosyl-L-methionine = N(alpha),N(alpha)-dimethyl-L-tryptophan + S-adenosyl-L-homocysteine + H(+). The enzyme catalyses N(alpha),N(alpha)-dimethyl-L-tryptophan + S-adenosyl-L-methionine = N(alpha),N(alpha),N(alpha)-trimethyl-L-tryptophan + S-adenosyl-L-homocysteine + H(+). Its function is as follows. Methyltransferase that catalyzes iterative L-tryptophan N-methylations to produce L-abrine (N-alpha-methyl-L-tryptophan) and N,N-alpha-dimethyl-L-tryptophan. Also catalyzes a third methylation to yield L-hypaphorine (N,N,N-alpha-trimethyl-L-tryptopan), an agonist of the phytohormone indole-3-acetic acid. Can also N-methylate the non-native amino acid substrate 4-hydroxytryptophan, but the ability to incorporate trpM into a functional psilocybin biosynthesis pathway is indeed thwarted by the inability of the L-tryptophan decarboxylase psiD to use N,N-dimethyl-4-hydroxytryptophan as substrate. The protein is L-tryptophan methyltransferase trpM of Psilocybe serbica.